The chain runs to 416 residues: MLEQMGIAAKAASYKLALLSSGEKNRVLEKIADELEAQMESILSANVQDVEQARDNGLSEAMLDRLTLTPARLKAIADDVRQVCNLADPVGQVIDGGLLDSGLRLERRRVPLGVVGVIYEARPNVTVDVASLCLKTGNAVILRGGKETHRTNAATVRVIQKALKACGLPEAAVQAIDNPDRSLVNEMLRMDKYIDMLIPRGGAGLHKLCREQSTIPVITGGIGVCHIFVDSSADIAPALKIIVNAKTQRPSTCNTVETLLVHQDIAERFLPALSKQMAESGVTLHGDETVMQVLHGPAKLVPLKPEELDNEFLSLDLNVVVVENMDGAIGHIREHGTQHSDAILTCDMHNAARFVNEVDSAAVYVNASTRFTDGGQFGLGAEVAVSTQKLHARGPMGLEALTTYKWIGFGDGTIRA.

The protein belongs to the gamma-glutamyl phosphate reductase family.

Its subcellular location is the cytoplasm. The catalysed reaction is L-glutamate 5-semialdehyde + phosphate + NADP(+) = L-glutamyl 5-phosphate + NADPH + H(+). It functions in the pathway amino-acid biosynthesis; L-proline biosynthesis; L-glutamate 5-semialdehyde from L-glutamate: step 2/2. Functionally, catalyzes the NADPH-dependent reduction of L-glutamate 5-phosphate into L-glutamate 5-semialdehyde and phosphate. The product spontaneously undergoes cyclization to form 1-pyrroline-5-carboxylate. The protein is Gamma-glutamyl phosphate reductase of Salmonella agona (strain SL483).